Here is an 878-residue protein sequence, read N- to C-terminus: Bifunctional heparan sulfate N-deacetylase/N-sulfotransferase 1 (878 aa).

Over 1-17 (MSLSLKTRRFGRPVRPQ) the chain is Cytoplasmic. Residues 1–169 (MSLSLKTRRF…VEYGVGIIGF (169 aa)) form a sufficient for localization to Golgi membrane region. The helical; Signal-anchor for type II membrane protein transmembrane segment at 18-38 (LVLLLLFALCLLSVFISAYYL) threads the bilayer. Residues 39–878 (YGWKRGLEPS…WLREELQNTR (840 aa)) lie on the Lumenal side of the membrane. Residues 40–594 (GWKRGLEPSG…KRHKDIWSKE (555 aa)) form a heparan sulfate N-deacetylase 1 region. 3 N-linked (GlcNAc...) asparagine glycosylation sites follow: asparagine 231, asparagine 347, and asparagine 397. Positions 595–878 (KTCDRFPKLL…WLREELQNTR (284 aa)) are heparan sulfate N-sulfotransferase 1. The active-site For sulfotransferase activity is the lysine 610. An adenosine 3',5'-bisphosphate-binding site is contributed by 610–614 (KTGTT). N-linked (GlcNAc...) asparagine glycosylation is present at asparagine 663. Adenosine 3',5'-bisphosphate is bound by residues serine 708 and tryptophan 813. A disulfide bridge links cysteine 814 with cysteine 824. 829 to 833 (KGRKY) is a binding site for adenosine 3',5'-bisphosphate.

This sequence belongs to the sulfotransferase 1 family. NDST subfamily. In terms of assembly, monomer.

The protein localises to the golgi apparatus membrane. Its subcellular location is the golgi apparatus. It is found in the trans-Golgi network membrane. It carries out the reaction alpha-D-glucosaminyl-[heparan sulfate](n) + 3'-phosphoadenylyl sulfate = N-sulfo-alpha-D-glucosaminyl-[heparan sulfate](n) + adenosine 3',5'-bisphosphate + 2 H(+). It functions in the pathway glycan metabolism; heparan sulfate biosynthesis. Its pathway is glycan metabolism; heparin biosynthesis. Its function is as follows. Essential bifunctional enzyme that catalyzes both the N-deacetylation and the N-sulfation of glucosamine (GlcNAc) of the glycosaminoglycan in heparan sulfate. Modifies the GlcNAc-GlcA disaccharide repeating sugar backbone to make N-sulfated heparosan, a prerequisite substrate for later modifications in heparin biosynthesis. Plays a role in determining the extent and pattern of sulfation of heparan sulfate. The sequence is that of Bifunctional heparan sulfate N-deacetylase/N-sulfotransferase 1 (ndst1) from Xenopus laevis (African clawed frog).